The chain runs to 135 residues: UPF0102 protein RPC_0320 (135 aa).

Belongs to the UPF0102 family.

The chain is UPF0102 protein RPC_0320 from Rhodopseudomonas palustris (strain BisB18).